Here is a 626-residue protein sequence, read N- to C-terminus: LGDVPGTSGAIFVARPESNHPDRFGLFGAPPLEEGYVVLVGDRGLKRFPPPSEFLLSVWNRSRAARLVCCSIVLCCLCLTVFLYLSENMGQAVTTPLSLTLDHWKDVERTAHNLSVEVRKRRWVTFCSAEWPTFNVGWPRDGTFNPDIITQVKIKVFSPGPHGHPDQVPYIVTWEAIAVDPPPWVRPFVHPKPPLSLPPSAPSLPPEPPLSTPPQSSLYPALTSPLNTKPRPQVLPDSGGPLIDLLTEDPPPYRDPGPPSPDGNGDSGEVAPTEGAPDPSPMVSRLRGRKEPPVADSTTSQAFPLRLGGNGQYQYWPFSSSDLYNWKNNNPSFSEDPAKLTALIESVLLTHQPTWDDCQQLLGTLLTGEEKQRVLLEARKAVRGEDGRPTQLPNDINDAFPLERPDWDYNTQRGRNHLVHYRQLLLAGLQNAGRSPTNLAKVKGITQGPNESPSAFLERLKEAYRRYTPYDPEDPGQETNVAMSFIWQSAPDIGRKLERLEDLKSKTLGDLVREAEKIFNKRETPEEREERIRRETEEKEERRRAEDVQREKERDRRRHREMSKLLATVVSGQRQDRQGGERRRPQLDHDQCAYCKEKGHWARDCPKKPRGPRGPRPQASLLTLDD.

Over 1 to 66 (LGDVPGTSGA…SVWNRSRAAR (66 aa)) the chain is Cytoplasmic. The helical transmembrane segment at 67–86 (LVCCSIVLCCLCLTVFLYLS) threads the bilayer. Over 87-626 (ENMGQAVTTP…PQASLLTLDD (540 aa)) the chain is Extracellular. Residue N113 is glycosylated (N-linked (GlcNAc...) asparagine; by host). Composition is skewed to pro residues over residues 198–212 (PPSAPSLPPEPPLST) and 249–261 (DPPPYRDPGPPSP). Disordered regions lie at residues 198–306 (PPSA…FPLR) and 522–626 (RETP…TLDD). Composition is skewed to basic and acidic residues over residues 522–554 (RETPEEREERIRRETEEKEERRRAEDVQREKER) and 574–607 (RQDRQGGERRRPQLDHDQCAYCKEKGHWARDCPK). A coiled-coil region spans residues 526–566 (EEREERIRRETEEKEERRRAEDVQREKERDRRRHREMSKLL). The CCHC-type zinc finger occupies 590–607 (DQCAYCKEKGHWARDCPK).

Post-translationally, glycosylated by host. Cleaved by host near the middle of the molecule, releasing the c-terminal half containing capsid and nucleoprotein domains op GAG.

It localises to the host cell membrane. In terms of biological role, plays a role in viral particle release. Presumably acts by facilitating the fission of the virion bud at the cell surface. May prevent the antiviral activity of murine APOBEC3. This chain is Glyco-Gag protein, found in Mus musculus (Mouse).